We begin with the raw amino-acid sequence, 325 residues long: Beta-ketoacyl-[acyl-carrier-protein] synthase III (325 aa).

Active-site residues include C116 and H252. Positions 253-257 are ACP-binding; it reads QANLR. The active site involves N282.

Belongs to the thiolase-like superfamily. FabH family. Homodimer.

Its subcellular location is the cytoplasm. The catalysed reaction is malonyl-[ACP] + acetyl-CoA + H(+) = 3-oxobutanoyl-[ACP] + CO2 + CoA. The protein operates within lipid metabolism; fatty acid biosynthesis. In terms of biological role, catalyzes the condensation reaction of fatty acid synthesis by the addition to an acyl acceptor of two carbons from malonyl-ACP. Catalyzes the first condensation reaction which initiates fatty acid synthesis and may therefore play a role in governing the total rate of fatty acid production. Possesses both acetoacetyl-ACP synthase and acetyl transacylase activities. Its substrate specificity determines the biosynthesis of branched-chain and/or straight-chain of fatty acids. The chain is Beta-ketoacyl-[acyl-carrier-protein] synthase III from Xanthomonas axonopodis pv. citri (strain 306).